Here is a 358-residue protein sequence, read N- to C-terminus: Nicotinate-nucleotide--dimethylbenzimidazole phosphoribosyltransferase (358 aa).

The active-site Proton acceptor is glutamate 314.

Belongs to the CobT family.

The enzyme catalyses 5,6-dimethylbenzimidazole + nicotinate beta-D-ribonucleotide = alpha-ribazole 5'-phosphate + nicotinate + H(+). The protein operates within nucleoside biosynthesis; alpha-ribazole biosynthesis; alpha-ribazole from 5,6-dimethylbenzimidazole: step 1/2. In terms of biological role, catalyzes the synthesis of alpha-ribazole-5'-phosphate from nicotinate mononucleotide (NAMN) and 5,6-dimethylbenzimidazole (DMB). In Mycobacterium ulcerans (strain Agy99), this protein is Nicotinate-nucleotide--dimethylbenzimidazole phosphoribosyltransferase.